The following is a 365-amino-acid chain: Histidinol-phosphate aminotransferase (365 aa).

The interval 1 to 22 is disordered; that stretch reads MSRPVPNPGILDIAPYTPGKSP. Lysine 221 bears the N6-(pyridoxal phosphate)lysine mark.

The protein belongs to the class-II pyridoxal-phosphate-dependent aminotransferase family. Histidinol-phosphate aminotransferase subfamily. Homodimer. Pyridoxal 5'-phosphate is required as a cofactor.

It carries out the reaction L-histidinol phosphate + 2-oxoglutarate = 3-(imidazol-4-yl)-2-oxopropyl phosphate + L-glutamate. Its pathway is amino-acid biosynthesis; L-histidine biosynthesis; L-histidine from 5-phospho-alpha-D-ribose 1-diphosphate: step 7/9. This chain is Histidinol-phosphate aminotransferase, found in Nitrobacter winogradskyi (strain ATCC 25391 / DSM 10237 / CIP 104748 / NCIMB 11846 / Nb-255).